A 321-amino-acid chain; its full sequence is Transmembrane protein fend (321 aa).

Positions 1–18 are cleaved as a signal peptide; it reads MFHSLVLMACALAALSVA. Residues 19 to 261 are Extracellular-facing; that stretch reads QGAGSARSKS…ALPTPSELGG (243 aa). The helical transmembrane segment at 262–282 threads the bilayer; the sequence is VVYPAFGALAFFLALLVMFLF. At 283–321 the chain is on the cytoplasmic side; the sequence is LRPQRKRFPLDADSADTATLIGRSSSSSRNSMDASTLHV.

The protein localises to the membrane. Functionally, involved in the normal targeting of ventral muscle, muscle 12, by motoneurons. May function as an axon guidance molecule involved in neuromuscular specificity. The protein is Transmembrane protein fend (fend) of Drosophila melanogaster (Fruit fly).